We begin with the raw amino-acid sequence, 158 residues long: Immunoglobulin J chain (158 aa).

The signal sequence occupies residues 1–22 (MKNHLFFWGVLAIFVQAVLVTA). Intrachain disulfides connect cysteine 36–cysteine 122, cysteine 95–cysteine 115, and cysteine 130–cysteine 155. N-linked (GlcNAc...) (complex) asparagine glycosylation occurs at asparagine 72.

In terms of assembly, part of the secretory IgA (sIgA) complex that consists of two, four or five IgA monomers, and two additional non-Ig polypeptides, namely the JCHAIN and the secretory component (the proteolytic product of PIGR). Part of the secretory IgM (sIgM) complex that consist of five IgM monomers, and two additional non-Ig polypeptides, namely the JCHAIN and the secretory component (the proteolytic product of PIGR). JCHAIN-containing IgM interacts (via CH4 domain) with FCRM (via Ig-like domain). In terms of processing, N-glycosylated. N-glycans attached to Asn-72 varies from truncated, differentially fucosylated to sialylated (NeuGc) complex types: Man3GlcNAc2; GlcNAc2Man3GlcNAc2(Fuc); Gal1GlcNAc1Man3GlcNAc2; GlcNAc2Man3GlcNAc2; GlcNAc1Man3GlcNAc2; GlcNAc1Man2GlcNAc2 and NeuGc1Gal1GlcNAc2Man3GlcNAc2.

It localises to the secreted. Functionally, serves to link two monomer units of either IgM or IgA. In the case of IgM, the J chain-joined dimer is a nucleating unit for the IgM pentamer, and in the case of IgA it induces dimers and/or larger polymers. It also helps to bind these immunoglobulins to secretory component. This chain is Immunoglobulin J chain (JCHAIN), found in Equus asinus (Donkey).